A 100-amino-acid chain; its full sequence is Sodium-influx-stimulating peptide (100 aa).

The signal sequence occupies residues 1–23 (MLSSVALRYLLVLSLAFLAVVTS).

In terms of processing, three disulfide bonds are present. In terms of tissue distribution, expressed by the yellow cells, peptidergic (neuroendocrine) neurons of the central nervous system.

In terms of biological role, stimulates integumental Na(+) uptake. Controls the activity of sodium pumps in the integument, pericardium, ureter and nephridial gland. In Lymnaea stagnalis (Great pond snail), this protein is Sodium-influx-stimulating peptide (SIS).